Here is a 487-residue protein sequence, read N- to C-terminus: Glycogen synthase (487 aa).

Residue Lys20 coordinates ADP-alpha-D-glucose.

It belongs to the glycosyltransferase 1 family. Bacterial/plant glycogen synthase subfamily.

The enzyme catalyses [(1-&gt;4)-alpha-D-glucosyl](n) + ADP-alpha-D-glucose = [(1-&gt;4)-alpha-D-glucosyl](n+1) + ADP + H(+). It participates in glycan biosynthesis; glycogen biosynthesis. Functionally, synthesizes alpha-1,4-glucan chains using ADP-glucose. In Aliivibrio fischeri (strain MJ11) (Vibrio fischeri), this protein is Glycogen synthase.